Here is a 544-residue protein sequence, read N- to C-terminus: Chaperonin GroEL (544 aa).

ATP-binding positions include 30-33, K51, 87-91, G415, 479-481, and D495; these read TLGP, DGTTT, and NAA.

The protein belongs to the chaperonin (HSP60) family. As to quaternary structure, forms a cylinder of 14 subunits composed of two heptameric rings stacked back-to-back. Interacts with the co-chaperonin GroES.

It localises to the cytoplasm. It catalyses the reaction ATP + H2O + a folded polypeptide = ADP + phosphate + an unfolded polypeptide.. In terms of biological role, together with its co-chaperonin GroES, plays an essential role in assisting protein folding. The GroEL-GroES system forms a nano-cage that allows encapsulation of the non-native substrate proteins and provides a physical environment optimized to promote and accelerate protein folding. This is Chaperonin GroEL from Francisella tularensis subsp. novicida (strain U112).